A 468-amino-acid polypeptide reads, in one-letter code: Maltose fermentation regulatory protein MAL33 (468 aa).

A DNA-binding region (zn(2)-C6 fungal-type) is located at residues Cys-8–Cys-34. The Nuclear localization signal signature appears at Lys-41–Gly-49.

It belongs to the MAL13 family.

It localises to the nucleus. Its function is as follows. Regulates the coordinate transcription of structural MAL3S (maltase) and MAL3T (maltose permease) genes. This Saccharomyces cerevisiae (strain ATCC 204508 / S288c) (Baker's yeast) protein is Maltose fermentation regulatory protein MAL33 (MAL33).